Here is a 396-residue protein sequence, read N- to C-terminus: Gap junction gamma-1 protein (396 aa).

Topologically, residues 1–22 (MSWSFLTRLLEEIHNHSTFVGK) are cytoplasmic. The helical transmembrane segment at 23–45 (IWLTVLIVFRIVLTAVGGESIYY) threads the bilayer. The Extracellular portion of the chain corresponds to 46–75 (DEQSKFVCNTEQPGCENVCYDAFAPLSHVR). A helical membrane pass occupies residues 76–95 (FWVFQIILVATPSVMYLGYA). At 96-175 (IHKIAKMEHG…RRIREDGLMK (80 aa)) the chain is on the cytoplasmic side. The tract at residues 145 to 165 (ELESDKENKEQSQPKPKHDGR) is disordered. The span at 147 to 156 (ESDKENKEQS) shows a compositional bias: basic and acidic residues. Residues 176–198 (IYVLQLLARTVFEVGFLIGQYFL) form a helical membrane-spanning segment. Residues 199–228 (YGFQVHPFYVCSRLPCPHKIDCFISRPTEK) are Extracellular-facing. A helical transmembrane segment spans residues 229 to 248 (TIFLLIMYGVTGLCLLLNIW). Residues 249–396 (EMLHLGFGTI…SGDGKTSVWI (148 aa)) lie on the Cytoplasmic side of the membrane. Positions 353–396 (VQAYSHQNNPHGPREKKAKVGSKAGSNKSTASSKSGDGKTSVWI) are disordered. The span at 376–387 (AGSNKSTASSKS) shows a compositional bias: polar residues.

It belongs to the connexin family. Gamma-type subfamily. A connexon is composed of a hexamer of connexins. Interacts with CNST.

It is found in the cell membrane. The protein localises to the cell junction. It localises to the gap junction. Its function is as follows. One gap junction consists of a cluster of closely packed pairs of transmembrane channels, the connexons, through which materials of low MW diffuse from one cell to a neighboring cell. This is Gap junction gamma-1 protein (GJC1) from Homo sapiens (Human).